The primary structure comprises 757 residues: MNITQILSQELSATAAQITAAVELLDDGATVPFIARYRKEATGGLDDTQLRRLAERLQYLRELEERKAVVLKSIEEQGKLSDDLRAQIEAADNKTALEDLYLPYKPKRRTKAQIAREHGLQPLADVLLAEQSQDVEAAAQGYLNENVPDAKAALDGARAILMEQFAEDAELIGTLRDKLWNEAEIHAQVVEGKETEGEKFSDYFDHREPVRTMPSHRALAVLRGRNEGVLNIALKYQPDDTPITRQSEYEQIIACRFKVSDGHKWLRDTVRLTWRAKIFLSLELEALGRLKEAADTDAITVFARNLKDLLLVAPAGRLTTLGLDPGYRNGVKCAVVDDTGKLLDTVIVYLHQENNMLATLSRLIKQHGVKLIAIGNGTASRETDKIAGELVRGMPEMGLHKIVVSEAGASIYSASELAAREFPDLDVSLRGAVSIARRLQDPLAELVKIDPKSIGVGQYQHDVNQNQLAKSLDAVVEDCVNAVGVDVNTASAPLLARISGLNQTLAQNIVAYRDENGAFDSRKKLLKVPRLGEKTFEQAAGFLRINGGKEPLDASAVHPEAYPVVAKMLAQQGISAAELIGNRERVKQIKASDFTDERFGLPTILDILSELEKPGRDPRGEFQTASFAEGIHEISDLQVGMILEGVVSNVANFGAFVDIGVHQDGLVHISALSNKFVQDPREVVKAGDVVKVKVLEVDAARKRIALTMRLDDEPGGAKHKMPSENRSRERTAGRKPQRNDRAPANSAMADAFAKLKR.

An S1 motif domain is found at 640 to 709; the sequence is GMILEGVVSN…ARKRIALTMR (70 aa). Basic and acidic residues predominate over residues 711-741; it reads DDEPGGAKHKMPSENRSRERTAGRKPQRNDR. Positions 711-757 are disordered; that stretch reads DDEPGGAKHKMPSENRSRERTAGRKPQRNDRAPANSAMADAFAKLKR.

This is an uncharacterized protein from Neisseria meningitidis serogroup B (strain ATCC BAA-335 / MC58).